The following is a 553-amino-acid chain: Major facilitator-type transporter hxnZ (553 aa).

A run of 5 helical transmembrane segments spans residues 89–109 (FTVA…ISAV), 128–148 (VAYY…SDLI), 152–172 (PAFN…AGTS), 174–194 (FIAF…NVVC), and 213–233 (ALSG…WVFL). Asn-235 carries N-linked (GlcNAc...) asparagine glycosylation. A run of 7 helical transmembrane segments spans residues 257–277 (YTLI…IFVF), 366–386 (ALIW…FNFL), 409–429 (IQSA…NTFL), 433–453 (WMMG…VGVK), 459–481 (LAFS…YAIM), 496–516 (TASG…SLIA), and 525–545 (PIYA…GLPF).

This sequence belongs to the major facilitator superfamily.

The protein resides in the cell membrane. Its function is as follows. Major facilitator-type transporter, part of the hnx cluster involved in the purine degradation. The nicotinate hydroxylase hnxS accepts nicotinate as a substrate and catalyzes the first step of nicotinate catabolism. The major facilitator-type transporters hxnP and hxnZ are probably involved in the uptake of nicotinate-derived metabolites, and the oxidoreductases hxnT and hxnY in the further metabolism of 6-OH nicotinic acid. This chain is Major facilitator-type transporter hxnZ, found in Emericella nidulans (strain FGSC A4 / ATCC 38163 / CBS 112.46 / NRRL 194 / M139) (Aspergillus nidulans).